The chain runs to 312 residues: MTTNRLQVSLPGLDLKNPIIPASGCFGFGQEYAKYYDLNLLGSIMIKATTLEPRFGNPTPRVAETPAGMLNAIGLQNPGLEVVLAEKLPWLEREYPNLPIIANVAGFSKQEYAAVSHGISKATNVKAIELNISCPNVDHCNHGLLIGQDPDLAYDVVKAAVEASEVPVYVKLTPSVTDIVTVAKAAEDAGASGLTMINTLVGMRFDLKTRKPILANGTGGMSGPAVFPVALKLIRQVAQTTDLPIIGMGGVDSTEAALEMYLAGASAIGVGTANFTNPYACPDIIENLPKVMDKYGISSLEELRQEVKESLR.

Residues S23 and K47–A48 contribute to the FMN site. Residues K47 and N71–L75 each bind substrate. Residues N103 and N131 each coordinate FMN. Position 131 (N131) interacts with substrate. The Nucleophile role is filled by C134. The FMN site is built by K171 and I197. Position 198-199 (N198–T199) interacts with substrate. Residues G223, G249 to G250, and G271 to T272 contribute to the FMN site.

It belongs to the dihydroorotate dehydrogenase family. Type 1 subfamily. As to quaternary structure, heterotetramer of 2 PyrK and 2 PyrD type B subunits. It depends on FMN as a cofactor.

The protein localises to the cytoplasm. It catalyses the reaction (S)-dihydroorotate + NAD(+) = orotate + NADH + H(+). It functions in the pathway pyrimidine metabolism; UMP biosynthesis via de novo pathway; orotate from (S)-dihydroorotate (NAD(+) route): step 1/1. Catalyzes the conversion of dihydroorotate to orotate with NAD(+) as electron acceptor. The sequence is that of Dihydroorotate dehydrogenase B (NAD(+)), catalytic subunit (pyrDB) from Streptococcus pneumoniae (strain ATCC BAA-255 / R6).